We begin with the raw amino-acid sequence, 374 residues long: Probable trehalose-phosphate phosphatase 9 (374 aa).

The protein belongs to the trehalose phosphatase family. The cofactor is a divalent metal cation.

The catalysed reaction is alpha,alpha-trehalose 6-phosphate + H2O = alpha,alpha-trehalose + phosphate. It functions in the pathway glycan biosynthesis; trehalose biosynthesis. Functionally, removes the phosphate from trehalose 6-phosphate to produce free trehalose. Trehalose accumulation in plant may improve abiotic stress tolerance. The chain is Probable trehalose-phosphate phosphatase 9 (TPP9) from Oryza sativa subsp. japonica (Rice).